The following is a 213-amino-acid chain: Putative manganese efflux pump MntP (213 aa).

6 helical membrane passes run 3-23 (ILSI…VSVA), 36-56 (ALKV…IGWG), 67-87 (AFDH…MIFE), 130-150 (LAIA…FLGI), 152-172 (IVQT…LGVI), and 187-207 (IVGG…HTGI).

The protein belongs to the MntP (TC 9.B.29) family.

It localises to the cell membrane. Probably functions as a manganese efflux pump. The protein is Putative manganese efflux pump MntP of Clostridium perfringens (strain 13 / Type A).